The primary structure comprises 259 residues: Virion protein US10 homolog (259 aa).

Residues 162-174 (CAHWCCLGHAFGC) fold into a zinc finger.

It belongs to the herpesviridae US10 family. In terms of processing, phosphorylated.

It is found in the virion tegument. The protein localises to the host nucleus matrix. The sequence is that of Virion protein US10 homolog from Equine herpesvirus 4 (strain 1942) (EHV-4).